We begin with the raw amino-acid sequence, 416 residues long: Isobutyryl-CoA dehydrogenase, mitochondrial (416 aa).

A mitochondrion-targeting transit peptide spans 1–23 (MMLRGGCQRVGARLRGLRRGPRG). K51 is modified (N6-acetyllysine; alternate). Residue K51 is modified to N6-succinyllysine; alternate. Residues 159-168 (YCLTEPGSGS) and 192-194 (FIS) contribute to the FAD site. S168 is a substrate binding site. K232 is subject to N6-acetyllysine. K272 is modified (N6-succinyllysine). 275-278 (NGGR) is a substrate binding site. FAD is bound by residues R303, 313 to 314 (SQ), and 372 to 376 (QMHGG). Residue E399 is the Proton acceptor of the active site. FAD is bound at residue 401–403 (SNE). R411 contacts substrate.

Belongs to the acyl-CoA dehydrogenase family. As to quaternary structure, homotetramer, formed by a dimer of dimers. FAD is required as a cofactor.

Its subcellular location is the mitochondrion. It carries out the reaction 2-methylpropanoyl-CoA + oxidized [electron-transfer flavoprotein] + H(+) = 2-methylpropenoyl-CoA + reduced [electron-transfer flavoprotein]. It catalyses the reaction (2S)-2-methylbutanoyl-CoA + oxidized [electron-transfer flavoprotein] + H(+) = (2E)-2-methylbut-2-enoyl-CoA + reduced [electron-transfer flavoprotein]. The enzyme catalyses propanoyl-CoA + oxidized [electron-transfer flavoprotein] + H(+) = acryloyl-CoA + reduced [electron-transfer flavoprotein]. The protein operates within amino-acid degradation; L-valine degradation. Its function is as follows. Isobutyryl-CoA dehydrogenase which catalyzes the conversion of 2-methylpropanoyl-CoA to (2E)-2-methylpropenoyl-CoA in the valine catabolic pathway. To a lesser extent, also able to catalyze the oxidation of (2S)-2-methylbutanoyl-CoA. The polypeptide is Isobutyryl-CoA dehydrogenase, mitochondrial (ACAD8) (Bos taurus (Bovine)).